The following is a 437-amino-acid chain: Ribosomal protein uS12 methylthiotransferase RimO (437 aa).

Residues 4 to 114 (PRIGFISLGC…VMNAVHEHLP (111 aa)) form the MTTase N-terminal domain. 6 residues coordinate [4Fe-4S] cluster: Cys13, Cys49, Cys78, Cys145, Cys149, and Cys152. In terms of domain architecture, Radical SAM core spans 131–368 (LTPRHYAYLK…MEVQERISAA (238 aa)). One can recognise a TRAM domain in the interval 371 to 437 (RTRIGRTETV…AHDLWARLAD (67 aa)).

Belongs to the methylthiotransferase family. RimO subfamily. [4Fe-4S] cluster serves as cofactor.

It localises to the cytoplasm. The enzyme catalyses L-aspartate(89)-[ribosomal protein uS12]-hydrogen + (sulfur carrier)-SH + AH2 + 2 S-adenosyl-L-methionine = 3-methylsulfanyl-L-aspartate(89)-[ribosomal protein uS12]-hydrogen + (sulfur carrier)-H + 5'-deoxyadenosine + L-methionine + A + S-adenosyl-L-homocysteine + 2 H(+). Functionally, catalyzes the methylthiolation of an aspartic acid residue of ribosomal protein uS12. This Methylococcus capsulatus (strain ATCC 33009 / NCIMB 11132 / Bath) protein is Ribosomal protein uS12 methylthiotransferase RimO.